Here is a 456-residue protein sequence, read N- to C-terminus: MLADSLVEEFEIREDEPWYDQQDLQQDLHLAAELGKTLLDRNTELEESLQQMYATNQEQLQEIEYLTKQVELLRQMNDQHAKVYEQLDVTARELEDTNQKLVAESRASQQKILSLTETIENLQTHVDDLQRQVEELKKSGRGRMNHERSDQPRSMHSFSCLKELYDLRQYFVYDHVFAEKITSMDSQLNPLEEENENLKKAVTVLQAQLTLEKEKRVTMEEEYSLVVKENCDLEQRLVDIDLYRARAEELEVEVAEMRQMLQSENTIHSAEKLVPESFFISFKESLERELGQSPADDGLLTVPELDKKALKRSSSENFLSSAAGGDILRGHEETCIRRAEAVKQRGISVLNEVDAQYNALKVKYEELLKKCQIDEDSLKHKAVQTLKQYSKDSVGNTQYDLSANNQEFTNAGELLSSTNTLPEYKALFKEIFSCIKKTKEEIDEHRSKYKSLSSQP.

Coiled-coil stretches lie at residues 38-142 (LLDR…SGRG), 178-268 (AEKI…NTIH), and 348-376 (SVLN…IDED).

The protein belongs to the CDR2 family.

The chain is Cerebellar degeneration-related protein 2 (CDR2) from Gallus gallus (Chicken).